Consider the following 541-residue polypeptide: Carotenoid 9,10(9',10')-cleavage dioxygenase 1 (541 aa).

Histidine 222, histidine 270, histidine 336, and histidine 526 together coordinate Fe cation.

Belongs to the carotenoid oxygenase family. Fe(2+) serves as cofactor.

The enzyme catalyses all-trans-zeaxanthin + 2 O2 = 4,9-dimethyldodeca-2,4,6,8,10-pentaenedial + 2 (3R)-hydroxy-beta-ionone. In terms of biological role, cleaves a variety of carotenoids at the 9-10 and 9'-10' double bonds. Probably not involved in abscisic acid biosynthesis. In Pisum sativum (Garden pea), this protein is Carotenoid 9,10(9',10')-cleavage dioxygenase 1 (CCD1).